The chain runs to 460 residues: GTPase Der (460 aa).

EngA-type G domains lie at 2–166 and 175–353; these read KTIA…AEER and TRIA…QERK. GTP-binding positions include 8–15, 55–59, 118–121, 181–188, 228–232, and 293–296; these read GRPNVGKS, DTGGL, NKLD, GQPNAGKS, DTAGL, and NKID. Positions 354-446 constitute a KH-like domain; sequence KRIPTHRLTQ…LLWKWRKAEG (93 aa).

The protein belongs to the TRAFAC class TrmE-Era-EngA-EngB-Septin-like GTPase superfamily. EngA (Der) GTPase family. As to quaternary structure, associates with the 50S ribosomal subunit.

Functionally, GTPase that plays an essential role in the late steps of ribosome biogenesis. In Methylacidiphilum infernorum (isolate V4) (Methylokorus infernorum (strain V4)), this protein is GTPase Der.